Here is a 213-residue protein sequence, read N- to C-terminus: Thiopurine S-methyltransferase (213 aa).

Positions 10, 45, 66, and 120 each coordinate S-adenosyl-L-methionine.

Belongs to the class I-like SAM-binding methyltransferase superfamily. TPMT family.

It is found in the cytoplasm. The enzyme catalyses S-adenosyl-L-methionine + a thiopurine = S-adenosyl-L-homocysteine + a thiopurine S-methylether.. This chain is Thiopurine S-methyltransferase, found in Photobacterium profundum (strain SS9).